A 234-amino-acid polypeptide reads, in one-letter code: Cyclo(L-leucyl-L-leucyl) synthase (234 aa).

Catalysis depends on Ser33, which acts as the Nucleophile. Substrate-binding positions include Asn36, 179–183 (YIFAE), Tyr203, and 208–209 (SI).

It belongs to the CDPS family.

The catalysed reaction is 2 L-leucyl-tRNA(Leu) = cyclo(L-leucyl-L-leucyl) + 2 tRNA(Leu) + 2 H(+). Its function is as follows. It uses activated amino acids in the form of aminoacyl-tRNAs (aa-tRNAs) as substrates to catalyze the ATP-independent formation of cyclodipeptides which are intermediates in diketopiperazine (DKP) biosynthetic pathways. Catalyzes the formation of cyclo(L-Leu-L-Leu) (cLL) from L-leucyl-tRNA(Leu). Can incorporate various nonpolar residues, such as L-phenylalanine, L-leucine and L-methionine, into cyclodipeptides. In Photorhabdus laumondii subsp. laumondii (strain DSM 15139 / CIP 105565 / TT01) (Photorhabdus luminescens subsp. laumondii), this protein is Cyclo(L-leucyl-L-leucyl) synthase.